Consider the following 189-residue polypeptide: Elongation factor P (189 aa).

This sequence belongs to the elongation factor P family.

It is found in the cytoplasm. Its pathway is protein biosynthesis; polypeptide chain elongation. Involved in peptide bond synthesis. Stimulates efficient translation and peptide-bond synthesis on native or reconstituted 70S ribosomes in vitro. Probably functions indirectly by altering the affinity of the ribosome for aminoacyl-tRNA, thus increasing their reactivity as acceptors for peptidyl transferase. The sequence is that of Elongation factor P from Phytoplasma australiense.